We begin with the raw amino-acid sequence, 141 residues long: Large ribosomal subunit protein uL11 (141 aa).

Belongs to the universal ribosomal protein uL11 family. Part of the ribosomal stalk of the 50S ribosomal subunit. Interacts with L10 and the large rRNA to form the base of the stalk. L10 forms an elongated spine to which L12 dimers bind in a sequential fashion forming a multimeric L10(L12)X complex. In terms of processing, one or more lysine residues are methylated.

Functionally, forms part of the ribosomal stalk which helps the ribosome interact with GTP-bound translation factors. The chain is Large ribosomal subunit protein uL11 from Cyanothece sp. (strain PCC 7425 / ATCC 29141).